The primary structure comprises 419 residues: MNNQKQQKPTLSGQRFKTRKRDEKERFDPTQFQDCIIQGLTETGTDLEAVAKFLDASGAKLDYRRYAETLFDILVAGGMLAPGGTLADDMMRTDVCVFAAQEDLETMQAFAQVFNKLIRRYKYLEKGFEDEVKKLLLFLKGFSESERNKLAMLTGVLLANGTLNASILNSLYNENLVKEGVSAAFAVKLFKSWINEKDINAVAASLRKVSMDNRLMELFPANKQSVEHFTKYFTEAGLKELSEYVRNQQTIGARKELQKELQEQMSRGDPFKDIILYVKEEMKKNNIPEPVVIGIVWSSVMSTVEWNKKEELVAEQAIKHLKQYSPLLAAFTTQGQSELTLLLKIQEYCYDNIHFMKAFQKIVVLFYKAEVLSEEPILKWYKDAHVAKGKSVFLEQMKKFVEWLKNAEEESESEAEEGD.

Residue methionine 1 is modified to N-acetylmethionine. Residues 1-15 show a composition bias toward polar residues; sequence MNNQKQQKPTLSGQR. Positions 1–26 are disordered; sequence MNNQKQQKPTLSGQRFKTRKRDEKER. At serine 12 the chain carries Phosphoserine. Residues 247–414 enclose the W2 domain; the sequence is NQQTIGARKE…KNAEEESESE (168 aa). Residue lysine 368 forms a Glycyl lysine isopeptide (Lys-Gly) (interchain with G-Cter in SUMO2) linkage. Phosphoserine is present on residues serine 411 and serine 413.

The protein belongs to the BZW family.

Translation initiation regulator which represses repeat-associated non-AUG (RAN) initiated translation probably by acting as a competitive inhibitor of eukaryotic translation initiation factor 5 (EIF5) function. Enhances histone H4 gene transcription but does not seem to bind DNA directly. This Homo sapiens (Human) protein is eIF5-mimic protein 2 (BZW1).